A 170-amino-acid chain; its full sequence is Peptide deformylase (170 aa).

Fe cation-binding residues include Cys-94 and His-136. Residue Glu-137 is part of the active site. Position 140 (His-140) interacts with Fe cation.

The protein belongs to the polypeptide deformylase family. It depends on Fe(2+) as a cofactor.

The catalysed reaction is N-terminal N-formyl-L-methionyl-[peptide] + H2O = N-terminal L-methionyl-[peptide] + formate. Its function is as follows. Removes the formyl group from the N-terminal Met of newly synthesized proteins. Requires at least a dipeptide for an efficient rate of reaction. N-terminal L-methionine is a prerequisite for activity but the enzyme has broad specificity at other positions. The polypeptide is Peptide deformylase (Stenotrophomonas maltophilia (strain R551-3)).